A 94-amino-acid chain; its full sequence is Co-chaperonin GroES (94 aa).

This sequence belongs to the GroES chaperonin family. In terms of assembly, heptamer of 7 subunits arranged in a ring. Interacts with the chaperonin GroEL.

Its subcellular location is the cytoplasm. Functionally, together with the chaperonin GroEL, plays an essential role in assisting protein folding. The GroEL-GroES system forms a nano-cage that allows encapsulation of the non-native substrate proteins and provides a physical environment optimized to promote and accelerate protein folding. GroES binds to the apical surface of the GroEL ring, thereby capping the opening of the GroEL channel. In Shouchella clausii (strain KSM-K16) (Alkalihalobacillus clausii), this protein is Co-chaperonin GroES.